We begin with the raw amino-acid sequence, 361 residues long: Phospho-N-acetylmuramoyl-pentapeptide-transferase (361 aa).

The next 11 membrane-spanning stretches (helical) occupy residues 10–30 (PGTG…ACLI), 40–60 (LSLP…IGVP), 84–104 (GTPT…GSLV), 107–127 (GDPR…IGGI), 147–167 (LLLQ…HGAI), 175–195 (WGWL…VFLA), 206–226 (LDGL…LQLM), 232–252 (GDPA…GFLL), 260–280 (VFMG…IALL), 288–308 (LLMG…VWVF), and 341–361 (VVVS…VLVP).

This sequence belongs to the glycosyltransferase 4 family. MraY subfamily. Mg(2+) is required as a cofactor.

The protein localises to the cell inner membrane. The catalysed reaction is UDP-N-acetyl-alpha-D-muramoyl-L-alanyl-gamma-D-glutamyl-meso-2,6-diaminopimeloyl-D-alanyl-D-alanine + di-trans,octa-cis-undecaprenyl phosphate = di-trans,octa-cis-undecaprenyl diphospho-N-acetyl-alpha-D-muramoyl-L-alanyl-D-glutamyl-meso-2,6-diaminopimeloyl-D-alanyl-D-alanine + UMP. Its pathway is cell wall biogenesis; peptidoglycan biosynthesis. In terms of biological role, catalyzes the initial step of the lipid cycle reactions in the biosynthesis of the cell wall peptidoglycan: transfers peptidoglycan precursor phospho-MurNAc-pentapeptide from UDP-MurNAc-pentapeptide onto the lipid carrier undecaprenyl phosphate, yielding undecaprenyl-pyrophosphoryl-MurNAc-pentapeptide, known as lipid I. This chain is Phospho-N-acetylmuramoyl-pentapeptide-transferase, found in Synechococcus sp. (strain RCC307).